The sequence spans 725 residues: Fatty acid oxidation complex subunit alpha (725 aa).

The interval 1–189 (MIYQGENLSV…ALGMIDGVVS (189 aa)) is enoyl-CoA hydratase/isomerase. Asp296 contributes to the substrate binding site. The 3-hydroxyacyl-CoA dehydrogenase stretch occupies residues 311–725 (EPVTSAAVLG…APQSLSAPSA (415 aa)). NAD(+) contacts are provided by residues Met324, Asp343, 400–402 (VVE), Lys407, and Ser429. The active-site For 3-hydroxyacyl-CoA dehydrogenase activity is the His450. NAD(+) is bound at residue Asn453. Substrate-binding residues include Asn500 and Tyr660.

It in the N-terminal section; belongs to the enoyl-CoA hydratase/isomerase family. The protein in the C-terminal section; belongs to the 3-hydroxyacyl-CoA dehydrogenase family. As to quaternary structure, heterotetramer of two alpha chains (FadB) and two beta chains (FadA).

The catalysed reaction is a (3S)-3-hydroxyacyl-CoA + NAD(+) = a 3-oxoacyl-CoA + NADH + H(+). It carries out the reaction a (3S)-3-hydroxyacyl-CoA = a (2E)-enoyl-CoA + H2O. It catalyses the reaction a 4-saturated-(3S)-3-hydroxyacyl-CoA = a (3E)-enoyl-CoA + H2O. The enzyme catalyses (3S)-3-hydroxybutanoyl-CoA = (3R)-3-hydroxybutanoyl-CoA. The catalysed reaction is a (3Z)-enoyl-CoA = a 4-saturated (2E)-enoyl-CoA. It carries out the reaction a (3E)-enoyl-CoA = a 4-saturated (2E)-enoyl-CoA. Its pathway is lipid metabolism; fatty acid beta-oxidation. Its function is as follows. Involved in the aerobic and anaerobic degradation of long-chain fatty acids via beta-oxidation cycle. Catalyzes the formation of 3-oxoacyl-CoA from enoyl-CoA via L-3-hydroxyacyl-CoA. It can also use D-3-hydroxyacyl-CoA and cis-3-enoyl-CoA as substrate. This Aliivibrio fischeri (strain MJ11) (Vibrio fischeri) protein is Fatty acid oxidation complex subunit alpha.